The primary structure comprises 139 residues: Large-conductance mechanosensitive channel (139 aa).

The next 2 helical transmembrane spans lie at 14–34 (VIDLAVGVIVGAAFTAIINSL) and 81–101 (GSFLTAVINFLLIAFVVFMIV).

It belongs to the MscL family. In terms of assembly, homopentamer.

The protein localises to the cell membrane. In terms of biological role, channel that opens in response to stretch forces in the membrane lipid bilayer. May participate in the regulation of osmotic pressure changes within the cell. The sequence is that of Large-conductance mechanosensitive channel from Chloroflexus aurantiacus (strain ATCC 29366 / DSM 635 / J-10-fl).